The following is a 269-amino-acid chain: Putative imidazole glycerol phosphate synthase subunit hisF2 (269 aa).

Residue Asp-133 is part of the active site.

It belongs to the HisA/HisF family. Heterodimer of HisH and HisF.

It localises to the cytoplasm. It carries out the reaction 5-[(5-phospho-1-deoxy-D-ribulos-1-ylimino)methylamino]-1-(5-phospho-beta-D-ribosyl)imidazole-4-carboxamide + L-glutamine = D-erythro-1-(imidazol-4-yl)glycerol 3-phosphate + 5-amino-1-(5-phospho-beta-D-ribosyl)imidazole-4-carboxamide + L-glutamate + H(+). The protein operates within amino-acid biosynthesis; L-histidine biosynthesis; L-histidine from 5-phospho-alpha-D-ribose 1-diphosphate: step 5/9. In terms of biological role, IGPS catalyzes the conversion of PRFAR and glutamine to IGP, AICAR and glutamate. The HisF subunit catalyzes the cyclization activity that produces IGP and AICAR from PRFAR using the ammonia provided by the HisH subunit. The polypeptide is Putative imidazole glycerol phosphate synthase subunit hisF2 (hisF2) (Parasynechococcus marenigrum (strain WH8102)).